Here is a 345-residue protein sequence, read N- to C-terminus: Biotin synthase (345 aa).

In terms of domain architecture, Radical SAM core spans 38 to 256 (GEVQVSTLLS…IAVARIMMPR (219 aa)). Residues Cys53, Cys57, and Cys60 each contribute to the [4Fe-4S] cluster site. Positions 97, 128, 188, and 260 each coordinate [2Fe-2S] cluster.

This sequence belongs to the radical SAM superfamily. Biotin synthase family. As to quaternary structure, homodimer. [4Fe-4S] cluster serves as cofactor. It depends on [2Fe-2S] cluster as a cofactor.

The enzyme catalyses (4R,5S)-dethiobiotin + (sulfur carrier)-SH + 2 reduced [2Fe-2S]-[ferredoxin] + 2 S-adenosyl-L-methionine = (sulfur carrier)-H + biotin + 2 5'-deoxyadenosine + 2 L-methionine + 2 oxidized [2Fe-2S]-[ferredoxin]. Its pathway is cofactor biosynthesis; biotin biosynthesis; biotin from 7,8-diaminononanoate: step 2/2. Functionally, catalyzes the conversion of dethiobiotin (DTB) to biotin by the insertion of a sulfur atom into dethiobiotin via a radical-based mechanism. The chain is Biotin synthase from Sodalis glossinidius (strain morsitans).